Here is a 77-residue protein sequence, read N- to C-terminus: Putative ankyrin repeat protein RC0956 (77 aa).

An ANK repeat occupies Thr-8–Gly-38.

The polypeptide is Putative ankyrin repeat protein RC0956 (Rickettsia conorii (strain ATCC VR-613 / Malish 7)).